The following is a 206-amino-acid chain: Tektin bundle-interacting protein 1 (206 aa).

Microtubule inner protein component of sperm flagellar doublet microtubules.

The protein resides in the cytoplasm. Its subcellular location is the cytoskeleton. It is found in the cilium axoneme. The protein localises to the flagellum axoneme. In terms of biological role, microtubule inner protein (MIP) part of the dynein-decorated doublet microtubules (DMTs) in cilia axoneme, which is required for motile cilia beating. Located at the center of the tektin bundle where may function to recruit tektins or stabilize the bundle. This is Tektin bundle-interacting protein 1 from Mus musculus (Mouse).